Reading from the N-terminus, the 39-residue chain is U-limacoditoxin(13)-As54 (39 aa).

An N-terminal signal peptide occupies residues 1-23 (MSKYIVLLVVSAIALLQFSMIEC). Phenylalanine 37 is subject to Phenylalanine amide.

The protein belongs to the FARP (FMRFamide related peptide) family. As to expression, expressed by the venom secretory cell of the spine. The spine is a cuticular structure containing a single large nucleated venom-secreting cell at its base. It is an independent unit capable of producing, storing and injecting venom. On the back of A.stimulea caterpillars, spines are grouped together by 50 to 100 to form scoli, of which there are eight.

The protein resides in the secreted. Its function is as follows. Strongly activates (at 30 uM) the human neuropeptide FF receptor 1 (NPFF1R), a G-protein coupled receptor, with an effect that is equipotent to the endogenous RFRP-1 ligand in activating NPFFR1. Is toxic when injected into Drosophila melanogaster. Also shows a moderate anthelmintic activity against the parasitic nematode H.contortus (drug susceptible Kirby isolate) (IC(50)=20.1 uM). The polypeptide is U-limacoditoxin(13)-As54 (Acharia stimulea (Saddleback caterpillar moth)).